The primary structure comprises 314 residues: Methionyl-tRNA formyltransferase (314 aa).

Residue 109–112 (SVLP) participates in (6S)-5,6,7,8-tetrahydrofolate binding.

The protein belongs to the Fmt family.

It carries out the reaction L-methionyl-tRNA(fMet) + (6R)-10-formyltetrahydrofolate = N-formyl-L-methionyl-tRNA(fMet) + (6S)-5,6,7,8-tetrahydrofolate + H(+). In terms of biological role, attaches a formyl group to the free amino group of methionyl-tRNA(fMet). The formyl group appears to play a dual role in the initiator identity of N-formylmethionyl-tRNA by promoting its recognition by IF2 and preventing the misappropriation of this tRNA by the elongation apparatus. This is Methionyl-tRNA formyltransferase from Dictyoglomus turgidum (strain DSM 6724 / Z-1310).